Reading from the N-terminus, the 43-residue chain is SPbeta prophage-derived uncharacterized protein YopG (43 aa).

The sequence is that of SPbeta prophage-derived uncharacterized protein YopG (yopG) from Bacillus subtilis (strain 168).